Here is a 102-residue protein sequence, read N- to C-terminus: Large ribosomal subunit protein bL28 (102 aa).

Over residues 1 to 20 (MSNSCDLTGHGWQNGNMVSH) the composition is skewed to polar residues. A disordered region spans residues 1-27 (MSNSCDLTGHGWQNGNMVSHSNRKTKK).

It belongs to the bacterial ribosomal protein bL28 family.

This Neorickettsia sennetsu (strain ATCC VR-367 / Miyayama) (Ehrlichia sennetsu) protein is Large ribosomal subunit protein bL28.